The primary structure comprises 400 residues: Imidazolonepropionase (400 aa).

Fe(3+) contacts are provided by H68 and H70. 2 residues coordinate Zn(2+): H68 and H70. Positions 77, 140, and 173 each coordinate 4-imidazolone-5-propanoate. Y140 is a binding site for N-formimidoyl-L-glutamate. H238 contacts Fe(3+). A Zn(2+)-binding site is contributed by H238. Q241 provides a ligand contact to 4-imidazolone-5-propanoate. Residue D313 participates in Fe(3+) binding. D313 contributes to the Zn(2+) binding site. Residues N315 and G317 each coordinate N-formimidoyl-L-glutamate. T318 contacts 4-imidazolone-5-propanoate.

Belongs to the metallo-dependent hydrolases superfamily. HutI family. It depends on Zn(2+) as a cofactor. Fe(3+) is required as a cofactor.

It localises to the cytoplasm. It carries out the reaction 4-imidazolone-5-propanoate + H2O = N-formimidoyl-L-glutamate. The protein operates within amino-acid degradation; L-histidine degradation into L-glutamate; N-formimidoyl-L-glutamate from L-histidine: step 3/3. Functionally, catalyzes the hydrolytic cleavage of the carbon-nitrogen bond in imidazolone-5-propanoate to yield N-formimidoyl-L-glutamate. It is the third step in the universal histidine degradation pathway. The chain is Imidazolonepropionase from Paracoccus denitrificans (strain Pd 1222).